The chain runs to 466 residues: F-box/LRR-repeat protein fbxl-1 (466 aa).

Residues serine 54 to valine 100 enclose the F-box domain. 11 LRR repeats span residues glycine 122 to arginine 147, cysteine 148 to tyrosine 173, cysteine 174 to glycine 199, cysteine 200 to asparagine 225, cysteine 226 to histidine 251, methionine 252 to glycine 277, alanine 278 to histidine 303, serine 304 to glycine 329, cysteine 330 to asparagine 355, cysteine 356 to lysine 381, and cysteine 408 to histidine 433.

Component of the SCF (SKP1-CUL1-F-box protein)-type E3 ubiquitin ligase complex. As to expression, expressed in neuroglial cells such as the socket cell and sheath cell, neurosecretory motor neurons and regions around the pharynx and anus.

The protein localises to the perikaryon. The protein resides in the cell projection. It localises to the dendrite. Its subcellular location is the cilium. It is found in the axon. In terms of biological role, substrate-recognition component of the SCF (SKP1-CUL1-F-box protein)-type E3 ubiquitin ligase complex. Plays a role in regulating the entry into the dauer state. In hermaphrodites, may play a role in modulating the rate of defecation. This Caenorhabditis elegans protein is F-box/LRR-repeat protein fbxl-1.